The primary structure comprises 565 residues: Urocanate hydratase (565 aa).

NAD(+) is bound by residues 58–59 (GG), Q136, 182–184 (GMG), E202, R207, 245–246 (NA), 266–270 (QTSAH), 276–277 (YL), and Y325. Residue C413 is part of the active site. G495 is an NAD(+) binding site.

This sequence belongs to the urocanase family. It depends on NAD(+) as a cofactor.

It is found in the cytoplasm. It catalyses the reaction 4-imidazolone-5-propanoate = trans-urocanate + H2O. The protein operates within amino-acid degradation; L-histidine degradation into L-glutamate; N-formimidoyl-L-glutamate from L-histidine: step 2/3. Its function is as follows. Catalyzes the conversion of urocanate to 4-imidazolone-5-propionate. The protein is Urocanate hydratase of Vibrio vulnificus (strain YJ016).